A 410-amino-acid polypeptide reads, in one-letter code: LL-diaminopimelate aminotransferase (410 aa).

Substrate is bound by residues Tyr-15 and Gly-42. Residues Tyr-72, 108-109 (TK), Tyr-132, Asn-186, Tyr-217, and 245-247 (SFS) contribute to the pyridoxal 5'-phosphate site. Positions 109, 132, and 186 each coordinate substrate. N6-(pyridoxal phosphate)lysine is present on Lys-248. The pyridoxal 5'-phosphate site is built by Arg-256 and Asn-291. Substrate contacts are provided by Asn-291 and Arg-387.

The protein belongs to the class-I pyridoxal-phosphate-dependent aminotransferase family. LL-diaminopimelate aminotransferase subfamily. Homodimer. The cofactor is pyridoxal 5'-phosphate.

It catalyses the reaction (2S,6S)-2,6-diaminopimelate + 2-oxoglutarate = (S)-2,3,4,5-tetrahydrodipicolinate + L-glutamate + H2O + H(+). The protein operates within amino-acid biosynthesis; L-lysine biosynthesis via DAP pathway; LL-2,6-diaminopimelate from (S)-tetrahydrodipicolinate (aminotransferase route): step 1/1. Its function is as follows. Involved in the synthesis of meso-diaminopimelate (m-DAP or DL-DAP), required for both lysine and peptidoglycan biosynthesis. Catalyzes the direct conversion of tetrahydrodipicolinate to LL-diaminopimelate. This is LL-diaminopimelate aminotransferase from Lawsonia intracellularis (strain PHE/MN1-00).